We begin with the raw amino-acid sequence, 393 residues long: Peptidyl-prolyl cis-trans isomerase CYP7 (393 aa).

In terms of domain architecture, PPIase cyclophilin-type spans 8-196; it reads YLDISIDKKP…SDVRISDCGV (189 aa). TPR repeat units lie at residues 240–273, 292–325, and 330–363; these read ANII…INEY, MKIY…DNVP, and AKAY…NPDD.

In terms of assembly, interacts with RPD3 and CNS1.

The catalysed reaction is [protein]-peptidylproline (omega=180) = [protein]-peptidylproline (omega=0). Its function is as follows. PPIases accelerate the folding of proteins. It catalyzes the cis-trans isomerization of proline imidic peptide bonds in oligopeptides. Plays a major role in negative regulation of the heat shock transcription factor (HSF). This Saccharomyces cerevisiae (strain ATCC 204508 / S288c) (Baker's yeast) protein is Peptidyl-prolyl cis-trans isomerase CYP7 (CPR7).